Reading from the N-terminus, the 152-residue chain is Large ribosomal subunit protein uL22 (152 aa).

This sequence belongs to the universal ribosomal protein uL22 family. In terms of assembly, part of the 50S ribosomal subunit.

Functionally, this protein binds specifically to 23S rRNA. It makes multiple contacts with different domains of the 23S rRNA in the assembled 50S subunit and ribosome. The globular domain of the protein is located near the polypeptide exit tunnel on the outside of the subunit, while an extended beta-hairpin is found that lines the wall of the exit tunnel in the center of the 70S ribosome. The chain is Large ribosomal subunit protein uL22 from Methanothrix thermoacetophila (strain DSM 6194 / JCM 14653 / NBRC 101360 / PT) (Methanosaeta thermophila).